The following is a 333-amino-acid chain: Anthranilate phosphoribosyltransferase (333 aa).

Residues Gly78, 81–82 (GD), Thr86, 88–91 (NVST), 106–114 (KHGNYSVSS), and Ser118 contribute to the 5-phospho-alpha-D-ribose 1-diphosphate site. Gly78 lines the anthranilate pocket. Ser90 serves as a coordination point for Mg(2+). Residue Asn109 participates in anthranilate binding. Arg164 contacts anthranilate. Positions 222 and 223 each coordinate Mg(2+).

This sequence belongs to the anthranilate phosphoribosyltransferase family. As to quaternary structure, homodimer. The cofactor is Mg(2+).

The catalysed reaction is N-(5-phospho-beta-D-ribosyl)anthranilate + diphosphate = 5-phospho-alpha-D-ribose 1-diphosphate + anthranilate. It participates in amino-acid biosynthesis; L-tryptophan biosynthesis; L-tryptophan from chorismate: step 2/5. Its function is as follows. Catalyzes the transfer of the phosphoribosyl group of 5-phosphorylribose-1-pyrophosphate (PRPP) to anthranilate to yield N-(5'-phosphoribosyl)-anthranilate (PRA). This Natronomonas pharaonis (strain ATCC 35678 / DSM 2160 / CIP 103997 / JCM 8858 / NBRC 14720 / NCIMB 2260 / Gabara) (Halobacterium pharaonis) protein is Anthranilate phosphoribosyltransferase.